The chain runs to 136 residues: Riboflavin kinase (136 aa).

Gly15 to Arg20 serves as a coordination point for CDP. Residues Thr44 and Asn46 each contribute to the Mg(2+) site. FMN-binding residues include Thr103 and Glu111. Residue Tyr116 to Arg119 coordinates CDP.

The protein belongs to the archaeal riboflavin kinase family. It depends on Mg(2+) as a cofactor.

The enzyme catalyses riboflavin + CTP = CDP + FMN + H(+). It participates in cofactor biosynthesis; FMN biosynthesis; FMN from riboflavin (CTP route): step 1/1. Functionally, catalyzes the CTP-dependent phosphorylation of riboflavin (vitamin B2) to form flavin mononucleotide (FMN). This Sulfurisphaera tokodaii (strain DSM 16993 / JCM 10545 / NBRC 100140 / 7) (Sulfolobus tokodaii) protein is Riboflavin kinase.